Reading from the N-terminus, the 217-residue chain is Probable chemoreceptor glutamine deamidase CheD (217 aa).

The interval 194–217 (ATSGTAPSRGGELFTRASASRTPS) is disordered.

This sequence belongs to the CheD family.

The catalysed reaction is L-glutaminyl-[protein] + H2O = L-glutamyl-[protein] + NH4(+). Functionally, probably deamidates glutamine residues to glutamate on methyl-accepting chemotaxis receptors (MCPs), playing an important role in chemotaxis. This chain is Probable chemoreceptor glutamine deamidase CheD, found in Cupriavidus pinatubonensis (strain JMP 134 / LMG 1197) (Cupriavidus necator (strain JMP 134)).